The chain runs to 234 residues: 2,3,4,5-tetrahydropyridine-2,6-dicarboxylate N-acetyltransferase (234 aa).

The protein belongs to the transferase hexapeptide repeat family. DapH subfamily.

It carries out the reaction (S)-2,3,4,5-tetrahydrodipicolinate + acetyl-CoA + H2O = L-2-acetamido-6-oxoheptanedioate + CoA. The protein operates within amino-acid biosynthesis; L-lysine biosynthesis via DAP pathway; LL-2,6-diaminopimelate from (S)-tetrahydrodipicolinate (acetylase route): step 1/3. Catalyzes the transfer of an acetyl group from acetyl-CoA to tetrahydrodipicolinate. The chain is 2,3,4,5-tetrahydropyridine-2,6-dicarboxylate N-acetyltransferase from Lacticaseibacillus paracasei (strain ATCC 334 / BCRC 17002 / CCUG 31169 / CIP 107868 / KCTC 3260 / NRRL B-441) (Lactobacillus paracasei).